A 500-amino-acid chain; its full sequence is Maturase K (500 aa).

The protein belongs to the intron maturase 2 family. MatK subfamily.

Its subcellular location is the plastid. It is found in the chloroplast. Usually encoded in the trnK tRNA gene intron. Probably assists in splicing its own and other chloroplast group II introns. The polypeptide is Maturase K (Brasenia schreberi (Water shield)).